We begin with the raw amino-acid sequence, 53 residues long: Large ribosomal subunit protein bL32c (53 aa).

A disordered region spans residues methionine 1–isoleucine 21.

It belongs to the bacterial ribosomal protein bL32 family.

Its subcellular location is the plastid. It localises to the chloroplast. The protein is Large ribosomal subunit protein bL32c (rpl32) of Cyanidium caldarium (Red alga).